The following is an 873-amino-acid chain: V-type proton ATPase 116 kDa subunit a 2 (873 aa).

The Cytoplasmic segment spans residues 1–407 (MGSLSRSEEM…TIITFPFLFS (407 aa)). The helical transmembrane segment at 408-428 (CMFGDLGHGCIMLMAGLWFVL) threads the bilayer. Residues 429–445 (REKNLQARNIKDEIFNM) lie on the Lumenal side of the membrane. The chain crosses the membrane as a helical span at residues 446–466 (FFGGRYIILLMGLFSIHAGII). Residues 467 to 543 (YNDMFAKSFN…NKLNFLNSMK (77 aa)) are Cytoplasmic-facing. A helical transmembrane segment spans residues 544–564 (MKLSVILGISQMTFGVILSFF). N-linked (GlcNAc...) asparagine glycans are attached at residues Asn-565 and Asn-569. The Lumenal portion of the chain corresponds to 565-574 (NHTYNKSKID). A helical membrane pass occupies residues 575 to 595 (IFTVFIPQMLFMGCIFMYLCL). The Cytoplasmic portion of the chain corresponds to 596–614 (QIILKWLFFWTKEATVFGQ). Residues 615-635 (IYPGSHCAPSLLIGLINMFMM) traverse the membrane as a helical segment. At 636–668 (KDRNAGFVVDGGKVNGEYREVETCYLSQWYPGQ) the chain is on the lumenal side. The chain crosses the membrane as a helical span at residues 669-689 (SVIEMILVVIAVICVPVMLFG). Residues 690–785 (KPIHHVMQQK…LWALSLAHAQ (96 aa)) are Cytoplasmic-facing. A helical transmembrane segment spans residues 786–806 (LSEVLWHMVFVTGGLGISGTA). Position 807 (Gly-807) is a topological domain, lumenal. The chain crosses the membrane as a helical span at residues 808–828 (FIAVYVVFFIFFVLTISILVL). Topologically, residues 829-873 (MEGLSAFLHTLRLHWVEFQSKFYLGLGYPFVPYSFKTALQEAEAA) are cytoplasmic.

The protein belongs to the V-ATPase 116 kDa subunit family. As to quaternary structure, V-ATPase is a heteromultimeric enzyme made up of two complexes: the ATP-hydrolytic V1 complex and the proton translocation V0 complex. The V1 complex consists of three catalytic AB heterodimers that form a heterohexamer, three peripheral stalks each consisting of EG heterodimers, one central rotor including subunits D and F, and the regulatory subunits C and H. The proton translocation complex V0 consists of the proton transport subunit a, a ring of proteolipid subunits c9c'', rotary subunit d, subunits e and f, and the accessory subunits vah-19/Ac45 and vah-20/PRR. Interacts with V-type proton ATPase subunit C vha-11. Expressed in the H-shaped excretory cell (at protein level). Expressed in hypodermal cells around the vulva. Expressed in the main epidermal syncytium. Expressed in the sheath cells associated with head and tail sensory organs; specifically, expressed in the apical sheath cells of the amphids and CEP neuron and in the sheath cells of the OLQ sensory organ.

The protein resides in the apical cell membrane. It localises to the endosome. It is found in the multivesicular body membrane. In terms of biological role, subunit of the V0 complex of vacuolar(H+)-ATPase (V-ATPase), a multisubunit enzyme composed of a peripheral complex (V1) that hydrolyzes ATP and a membrane integral complex (V0) that translocates protons. V-ATPase is responsible for acidifying and maintaining the pH of intracellular compartments and in some cell types, is targeted to the plasma membrane, where it is responsible for acidifying the extracellular environment. Involved in the assembly of the V-ATPase complex. The V-ATPase is required for the function of the excretory canal. Independently of the V1 complex, the V0 complex of the V-ATPase is required for multivesicular body membrane fusion with the apical membrane of the epidermal cells during exosome release and thus regulates the release of cuticle components such as Hedgehog-related peptide wrt-2 but not collagen. Also, in the epidermis, regulates the trafficking of che-14 and rdy-2. Regulates the secretion of granular material found in the amphid channel and in controlling osmoregulation in the amphid pocket. This Caenorhabditis elegans protein is V-type proton ATPase 116 kDa subunit a 2.